The primary structure comprises 256 residues: Stanniocalcin (256 aa).

The signal sequence occupies residues methionine 1 to alanine 18. The propeptide occupies threonine 19 to arginine 33. The N-linked (GlcNAc...) asparagine glycan is linked to asparagine 62.

This sequence belongs to the stanniocalcin family. In terms of assembly, homodimer; disulfide-linked. Produced and secreted by the corpuscles of Stannius.

The protein resides in the secreted. Functionally, its primary function is the prevention of hypercalcemia. Upon release into the circulation, it lowers calcium transport by the gills, thereby reducing its rate of influx from the environment into the extracellular compartment. STC also stimulates phosphate reabsorption by renal proximal tubules. The consequence of this action is increased levels of plasma phosphate, which combines with excess calcium and promotes its disposal into bone and scales. This is Stanniocalcin (stc) from Oncorhynchus kisutch (Coho salmon).